A 541-amino-acid polypeptide reads, in one-letter code: Protein yellow (541 aa).

Residues 1–21 (MFQDKGWILVTLITLVTPSWA) form the signal peptide. Residues Asn-144 and Asn-215 are each glycosylated (N-linked (GlcNAc...) asparagine). Residues 443–463 (QKPQTSWASSPPPPSRTYLPA) form a disordered region.

The protein belongs to the major royal jelly protein family.

The protein localises to the secreted. Functionally, controls the pigmentation pattern of the adult cuticle and larval mouth parts. This is Protein yellow (y) from Drosophila mauritiana (Fruit fly).